A 192-amino-acid chain; its full sequence is Putative 3-methyladenine DNA glycosylase (192 aa).

The protein belongs to the DNA glycosylase MPG family.

This is Putative 3-methyladenine DNA glycosylase from Methanoculleus marisnigri (strain ATCC 35101 / DSM 1498 / JR1).